The primary structure comprises 120 residues: Large ribosomal subunit protein uL22 (120 aa).

Positions 1–20 (MFVNRRYTARGKNLPSSPKK) are disordered.

It belongs to the universal ribosomal protein uL22 family. In terms of assembly, part of the 50S ribosomal subunit.

This protein binds specifically to 23S rRNA; its binding is stimulated by other ribosomal proteins, e.g. L4, L17, and L20. It is important during the early stages of 50S assembly. It makes multiple contacts with different domains of the 23S rRNA in the assembled 50S subunit and ribosome. In terms of biological role, the globular domain of the protein is located near the polypeptide exit tunnel on the outside of the subunit, while an extended beta-hairpin is found that lines the wall of the exit tunnel in the center of the 70S ribosome. In Borrelia hermsii (strain HS1 / DAH), this protein is Large ribosomal subunit protein uL22.